The sequence spans 100 residues: Urease subunit gamma (100 aa).

Belongs to the urease gamma subunit family. In terms of assembly, heterotrimer of UreA (gamma), UreB (beta) and UreC (alpha) subunits. Three heterotrimers associate to form the active enzyme.

Its subcellular location is the cytoplasm. The enzyme catalyses urea + 2 H2O + H(+) = hydrogencarbonate + 2 NH4(+). The protein operates within nitrogen metabolism; urea degradation; CO(2) and NH(3) from urea (urease route): step 1/1. The protein is Urease subunit gamma of Pseudomonas aeruginosa (strain LESB58).